Consider the following 1316-residue polypeptide: Serine/threonine-protein kinase 36 (1316 aa).

A Protein kinase domain is found at 4–254 (YHVLEMIGEG…WPDLLHHPFI (251 aa)). Residues 10–18 (IGEGSFGRV) and Lys-33 contribute to the ATP site. Asp-125 (proton acceptor) is an active-site residue. Residues 389 to 418 (QGFPEPRPEAMGRQSTDVVDPENEEPDSDD) form a disordered region. The span at 407-418 (VDPENEEPDSDD) shows a compositional bias: acidic residues.

The protein belongs to the protein kinase superfamily. Ser/Thr protein kinase family. As to quaternary structure, interacts with SPAG16 and KIF27. The cofactor is Mg(2+). In terms of tissue distribution, weakly expressed in the heart and thymus, present at moderate to high levels in the lungs, pancreas, and kidneys and at higher levels in the brain and cerebellum. Very highly expressed in the testis.

Its subcellular location is the cytoplasm. The protein localises to the nucleus. It localises to the cytoskeleton. The protein resides in the cilium axoneme. The enzyme catalyses L-seryl-[protein] + ATP = O-phospho-L-seryl-[protein] + ADP + H(+). It catalyses the reaction L-threonyl-[protein] + ATP = O-phospho-L-threonyl-[protein] + ADP + H(+). Functionally, serine/threonine protein kinase which plays an important role in the sonic hedgehog (Shh) pathway by regulating the activity of GLI transcription factors. Controls the activity of the transcriptional regulators GLI1, GLI2 and GLI3 by opposing the effect of SUFU and promoting their nuclear localization. GLI2 requires an additional function of STK36 to become transcriptionally active, but the enzyme does not need to possess an active kinase catalytic site for this to occur. Required for postnatal development, possibly by regulating the homeostasis of cerebral spinal fluid or ciliary function. Essential for construction of the central pair apparatus of motile cilia. This chain is Serine/threonine-protein kinase 36, found in Mus musculus (Mouse).